The following is a 218-amino-acid chain: Small ribosomal subunit protein uS3 (218 aa).

The 69-residue stretch at 38–106 folds into the KH type-2 domain; the sequence is IREYISKRLQ…RVHINIVEIK (69 aa).

The protein belongs to the universal ribosomal protein uS3 family. In terms of assembly, part of the 30S ribosomal subunit. Forms a tight complex with proteins S10 and S14.

Its function is as follows. Binds the lower part of the 30S subunit head. Binds mRNA in the 70S ribosome, positioning it for translation. This chain is Small ribosomal subunit protein uS3, found in Geobacillus kaustophilus (strain HTA426).